The primary structure comprises 476 residues: Rho GTPase-activating protein 68F (476 aa).

Disordered regions lie at residues 1-35 and 241-266; these read MDAH…DLHD and DKLN…QQQH. Phosphoserine is present on residues Ser29 and Ser31. Positions 91–244 constitute a CRAL-TRIO domain; that stretch reads SENFQTPRNK…NICDLDDKLN (154 aa). Thr251 carries the post-translational modification Phosphothreonine. The span at 257-266 shows a compositional bias: polar residues; the sequence is NINASRQQQH. Residues 276–464 enclose the Rho-GAP domain; it reads VPLKFIVMNS…FVLQNHKDIY (189 aa).

In terms of biological role, functions as a GTPase-activating protein (GAP) for RhoA/Rho1 during gastrulation by converting it to an inactive GDP-bound state. The sequence is that of Rho GTPase-activating protein 68F (RhoGAP68F) from Drosophila melanogaster (Fruit fly).